The following is a 276-amino-acid chain: Rhamnulose-1-phosphate aldolase (276 aa).

Glu-117 is an active-site residue. Zn(2+) contacts are provided by His-141, His-143, and His-212.

Belongs to the aldolase class II family. RhaD subfamily. In terms of assembly, homotetramer. Zn(2+) is required as a cofactor.

Its subcellular location is the cytoplasm. The catalysed reaction is L-rhamnulose 1-phosphate = (S)-lactaldehyde + dihydroxyacetone phosphate. Its pathway is carbohydrate degradation; L-rhamnose degradation; glycerone phosphate from L-rhamnose: step 3/3. In terms of biological role, catalyzes the reversible cleavage of L-rhamnulose-1-phosphate to dihydroxyacetone phosphate (DHAP) and L-lactaldehyde. This Enterobacter sp. (strain 638) protein is Rhamnulose-1-phosphate aldolase.